The primary structure comprises 584 residues: Gag-Pro polyprotein (584 aa).

G2 carries the N-myristoyl glycine; by host lipid modification. The disordered stretch occupies residues 95-116 (EAPPSAPLAEDPQKPPPYPEQA). The short motif at 98–101 (PSAP) is the PTAP/PSAP motif element. The short motif at 109-112 (PPPY) is the PPXY motif element. 2 consecutive CCHC-type zinc fingers follow at residues 349 to 366 (QPCF…DCKQ) and 372 to 389 (GPCP…DCPQ). The 79-residue stretch at 457–535 (VQALLDTGAD…NQWTILGRDA (79 aa)) folds into the Peptidase A2 domain. D462 functions as the For protease activity; shared with dimeric partner in the catalytic mechanism.

Interacts with human TSG101. This interaction is essential for budding and release of viral particles. Specific enzymatic cleavages by the viral protease yield mature proteins. The polyprotein is cleaved during and after budding, this process is termed maturation. The protease is autoproteolytically processed at its N- and C-termini.

The protein localises to the virion. Functionally, matrix protein p19 targets Gag, Gag-Pro and Gag-Pro-Pol polyproteins to the plasma membrane via a multipartite membrane binding signal, that includes its myristoylated N-terminus. Also mediates nuclear localization of the preintegration complex. Capsid protein p24 forms the conical core of the virus that encapsulates the genomic RNA-nucleocapsid complex. In terms of biological role, nucleocapsid protein p15 is involved in the packaging and encapsidation of two copies of the genome. Its function is as follows. The aspartyl protease mediates proteolytic cleavages of Gag, Gag-Pro and Gag-Pro-Pol polyproteins during or shortly after the release of the virion from the plasma membrane. Cleavages take place as an ordered, step-wise cascade to yield mature proteins. This process is called maturation. Displays maximal activity during the budding process just prior to particle release from the cell. Hydrolyzes host EIF4GI in order to shut off the capped cellular mRNA translation. The resulting inhibition of cellular protein synthesis serves to ensure maximal viral gene expression and to evade host immune response. This is Gag-Pro polyprotein (gag-pro) from Homo sapiens (Human).